The following is a 186-amino-acid chain: Ribosomal RNA small subunit methyltransferase G (186 aa).

S-adenosyl-L-methionine contacts are provided by residues Gly-59, Phe-64, 110 to 111 (IE), and Arg-124.

It belongs to the methyltransferase superfamily. RNA methyltransferase RsmG family.

The protein resides in the cytoplasm. It catalyses the reaction guanosine(527) in 16S rRNA + S-adenosyl-L-methionine = N(7)-methylguanosine(527) in 16S rRNA + S-adenosyl-L-homocysteine. Its function is as follows. Specifically methylates the N7 position of guanine in position 527 of 16S rRNA. This is Ribosomal RNA small subunit methyltransferase G from Campylobacter curvus (strain 525.92).